The following is a 238-amino-acid chain: 1-(5-phosphoribosyl)-5-[(5-phosphoribosylamino)methylideneamino] imidazole-4-carboxamide isomerase (238 aa).

Aspartate 8 serves as the catalytic Proton acceptor. The Proton donor role is filled by aspartate 129.

It belongs to the HisA/HisF family.

It is found in the cytoplasm. The enzyme catalyses 1-(5-phospho-beta-D-ribosyl)-5-[(5-phospho-beta-D-ribosylamino)methylideneamino]imidazole-4-carboxamide = 5-[(5-phospho-1-deoxy-D-ribulos-1-ylimino)methylamino]-1-(5-phospho-beta-D-ribosyl)imidazole-4-carboxamide. Its pathway is amino-acid biosynthesis; L-histidine biosynthesis; L-histidine from 5-phospho-alpha-D-ribose 1-diphosphate: step 4/9. In Anaeromyxobacter dehalogenans (strain 2CP-1 / ATCC BAA-258), this protein is 1-(5-phosphoribosyl)-5-[(5-phosphoribosylamino)methylideneamino] imidazole-4-carboxamide isomerase.